The following is a 103-amino-acid chain: Pilin (103 aa).

Residues M1–A30 form the signal peptide. Residues H61–D76 show a composition bias toward basic and acidic residues. The interval H61–A103 is disordered. A compositionally biased stretch (pro residues) spans A92–A103.

The protein belongs to the mycobacterial pilin family. In terms of assembly, forms a homomer composed of subunits assembled in a large structure.

The protein resides in the fimbrium. In terms of biological role, structural subunit of pili, which are thin, flexible, coiled-coil, aggregative fibers. Mediates adhesion to the extracellular matrix, an event that would facilitate direct interaction with the host epithelium during infection in the lung or other tissues. The chain is Pilin (mtp) from Mycobacterium bovis (strain ATCC BAA-935 / AF2122/97).